Reading from the N-terminus, the 71-residue chain is uncharacterized protein (71 aa).

Residues 52-71 (KEKFERKEDEKSKPKGVRED) form a disordered region.

This is an uncharacterized protein from Archaeoglobus fulgidus (strain ATCC 49558 / DSM 4304 / JCM 9628 / NBRC 100126 / VC-16).